A 638-amino-acid chain; its full sequence is SUMO-activating enzyme subunit 2 (638 aa).

ATP-binding positions include 24–29 (GAGGIG), D48, 56–59 (NLNR), K72, 95–96 (SI), and 117–122 (DNRAAR). Residues C158 and C161 each coordinate Zn(2+). Residue K164 forms a Glycyl lysine isopeptide (Lys-Gly) (interchain with G-Cter in SUMO1) linkage. C173 serves as the catalytic Glycyl thioester intermediate. K190 participates in a covalent cross-link: Glycyl lysine isopeptide (Lys-Gly) (interchain with G-Cter in SUMO). Residues 202–233 (ADQEVSPDRADPEAAWEPTEAEARARASNEDG) are disordered. The residue at position 207 (S207) is a Phosphoserine. The segment covering 222-233 (AEARARASNEDG) has biased composition (basic and acidic residues). A Glycyl lysine isopeptide (Lys-Gly) (interchain with G-Cter in SUMO1); alternate cross-link involves residue K236. Glycyl lysine isopeptide (Lys-Gly) (interchain with G-Cter in SUMO2); alternate cross-links involve residues K236 and K257. Glycyl lysine isopeptide (Lys-Gly) (interchain with G-Cter in SUMO); alternate cross-links involve residues K257 and K271. Position 271 is an N6-acetyllysine; alternate (K271). K275 is covalently cross-linked (Glycyl lysine isopeptide (Lys-Gly) (interchain with G-Cter in SUMO)). K369 participates in a covalent cross-link: Glycyl lysine isopeptide (Lys-Gly) (interchain with G-Cter in SUMO2). A Glycyl lysine isopeptide (Lys-Gly) (interchain with G-Cter in SUMO1); alternate cross-link involves residue K418. A Glycyl lysine isopeptide (Lys-Gly) (interchain with G-Cter in SUMO2); alternate cross-link involves residue K418. Zn(2+) contacts are provided by C439 and C442. S505 is modified (phosphoserine). K538 is covalently cross-linked (Glycyl lysine isopeptide (Lys-Gly) (interchain with G-Cter in SUMO2)). S548 and S590 each carry phosphoserine. The segment covering 548–561 (SPEKVGPKQAEDAA) has biased composition (basic and acidic residues). The segment at 548–638 (SPEKVGPKQA…EDPDDVIALD (91 aa)) is disordered. Positions 581-594 (EQDDVLIVDSDEEG) are enriched in acidic residues. Residues 603–614 (GDDKARKRKLEE) show a composition bias toward basic and acidic residues. K609 participates in a covalent cross-link: Glycyl lysine isopeptide (Lys-Gly) (interchain with G-Cter in SUMO). K611 participates in a covalent cross-link: Glycyl lysine isopeptide (Lys-Gly) (interchain with G-Cter in SUMO); alternate. K611 carries the N6-acetyllysine; alternate modification. K621 participates in a covalent cross-link: Glycyl lysine isopeptide (Lys-Gly) (interchain with G-Cter in SUMO). Residues 628–638 (MEDPDDVIALD) are compositionally biased toward acidic residues.

Belongs to the ubiquitin-activating E1 family. In terms of assembly, heterodimer of SAE1 and UBA2/SAE2. The heterodimer corresponds to the two domains that are encoded on a single polypeptide chain in ubiquitin-activating enzyme E1. Interacts with UBE2I. Sumoylated with SUMO1 and SUMO2/3 and by UBC9. Sumoylation at Lys-236 inhibits enzymatic activity. Sumoylation at the C-terminal lysine cluster plays an essential role in nuclear trafficking. As to expression, broadly expressed, with highest levels in testis.

Its subcellular location is the cytoplasm. The protein localises to the nucleus. The protein operates within protein modification; protein sumoylation. Functionally, the heterodimer acts as an E1 ligase for SUMO1, SUMO2, SUMO3, and probably SUMO4. It mediates ATP-dependent activation of SUMO proteins followed by formation of a thioester bond between a SUMO protein and a conserved active site cysteine residue on UBA2/SAE2. The chain is SUMO-activating enzyme subunit 2 (Uba2) from Mus musculus (Mouse).